Consider the following 487-residue polypeptide: Galactose-1-phosphate uridylyltransferase (487 aa).

The protein belongs to the galactose-1-phosphate uridylyltransferase type 2 family.

The protein resides in the cytoplasm. The catalysed reaction is alpha-D-galactose 1-phosphate + UDP-alpha-D-glucose = alpha-D-glucose 1-phosphate + UDP-alpha-D-galactose. It functions in the pathway carbohydrate metabolism; galactose metabolism. The sequence is that of Galactose-1-phosphate uridylyltransferase from Lactiplantibacillus plantarum (strain ATCC BAA-793 / NCIMB 8826 / WCFS1) (Lactobacillus plantarum).